The primary structure comprises 81 residues: Large ribosomal subunit protein bL31B (81 aa).

Belongs to the bacterial ribosomal protein bL31 family. Type B subfamily. In terms of assembly, part of the 50S ribosomal subunit.

This chain is Large ribosomal subunit protein bL31B, found in Oceanobacillus iheyensis (strain DSM 14371 / CIP 107618 / JCM 11309 / KCTC 3954 / HTE831).